A 283-amino-acid chain; its full sequence is MKKRSPIVAGYFYPDKPGELRSVIEWSFKHGIGPGKPPSPSDIPATNSIGYVAPHAGYIYSGPVAAHVYFDMALNKKPDTIVILGTNHTGLGRPVSVYPEGVWETPLGDLVVDSEIGRLIVENSEIAEFDEYAHLEEHSIEVQLPFIVYIYGEDVKITPIVIGIHTPDIARDLAKSIYEASMSTGKRIIVIASSDFNHYEPHEETSRKDSMAIDRILKLDTDGLYNVILHNDISICGPGGIMTLMEYTKKLGGKAQLLKYATSGDTSGDYSHVVGYAALKFYI.

This sequence belongs to the MEMO1 family.

The sequence is that of MEMO1 family protein DKAM_1357 from Desulfurococcus amylolyticus (strain DSM 18924 / JCM 16383 / VKM B-2413 / 1221n) (Desulfurococcus kamchatkensis).